We begin with the raw amino-acid sequence, 152 residues long: SsrA-binding protein (152 aa).

It belongs to the SmpB family.

The protein localises to the cytoplasm. Functionally, required for rescue of stalled ribosomes mediated by trans-translation. Binds to transfer-messenger RNA (tmRNA), required for stable association of tmRNA with ribosomes. tmRNA and SmpB together mimic tRNA shape, replacing the anticodon stem-loop with SmpB. tmRNA is encoded by the ssrA gene; the 2 termini fold to resemble tRNA(Ala) and it encodes a 'tag peptide', a short internal open reading frame. During trans-translation Ala-aminoacylated tmRNA acts like a tRNA, entering the A-site of stalled ribosomes, displacing the stalled mRNA. The ribosome then switches to translate the ORF on the tmRNA; the nascent peptide is terminated with the 'tag peptide' encoded by the tmRNA and targeted for degradation. The ribosome is freed to recommence translation, which seems to be the essential function of trans-translation. This Lactobacillus helveticus (strain DPC 4571) protein is SsrA-binding protein.